The primary structure comprises 297 residues: MRPELSQYKHLSAGKVREIYEIDDKHILMVASDRISAYDFILDTEIPDKGRVLTAMSQFFFDTIDFPNHLAGPADDPRIPEEVLGRAMVCKKLNMLPFECVVRGYLTGSGLVEYKQTSSVCGVELPEGLVESSQLPEPIFTPATKADIGDHDINVSFDVVEERLGEARANQLRDASIAIYKAAAEIARERGVILADTKFEFGIDEDGTLVLGDEVLTPDSSRYWPLEGYEAGSVQPSFDKQFVRNWLTGPKSGWDKDSGLEPPALPGSVVEATRERYIEAYELISGQKFCQWIGSCV.

The protein belongs to the SAICAR synthetase family.

It carries out the reaction 5-amino-1-(5-phospho-D-ribosyl)imidazole-4-carboxylate + L-aspartate + ATP = (2S)-2-[5-amino-1-(5-phospho-beta-D-ribosyl)imidazole-4-carboxamido]succinate + ADP + phosphate + 2 H(+). It participates in purine metabolism; IMP biosynthesis via de novo pathway; 5-amino-1-(5-phospho-D-ribosyl)imidazole-4-carboxamide from 5-amino-1-(5-phospho-D-ribosyl)imidazole-4-carboxylate: step 1/2. The chain is Phosphoribosylaminoimidazole-succinocarboxamide synthase from Corynebacterium glutamicum (strain R).